A 233-amino-acid chain; its full sequence is MPIFRLPREPAFPDPALAEPDGLLAVGGDLEPERLLTAYAEGIFPWFDAESPILWWSPDPRLLLDPAALHVPRSLQRTLRRGTYRVSADQAFERVIRRCAERDRPGQQGTWITAEMVEAYVRLHRLGLAHSFEAWDGDALAGGLYGVSLGAAFFGESMFADAPDASKVAFVRSVEWLRSAGVELVDCQVRTEHLVRFGAREVPRAEFLARLARALEQPTLRGRWQLEAAGPPS.

This sequence belongs to the L/F-transferase family.

The protein resides in the cytoplasm. It carries out the reaction N-terminal L-lysyl-[protein] + L-leucyl-tRNA(Leu) = N-terminal L-leucyl-L-lysyl-[protein] + tRNA(Leu) + H(+). The catalysed reaction is N-terminal L-arginyl-[protein] + L-leucyl-tRNA(Leu) = N-terminal L-leucyl-L-arginyl-[protein] + tRNA(Leu) + H(+). The enzyme catalyses L-phenylalanyl-tRNA(Phe) + an N-terminal L-alpha-aminoacyl-[protein] = an N-terminal L-phenylalanyl-L-alpha-aminoacyl-[protein] + tRNA(Phe). In terms of biological role, functions in the N-end rule pathway of protein degradation where it conjugates Leu, Phe and, less efficiently, Met from aminoacyl-tRNAs to the N-termini of proteins containing an N-terminal arginine or lysine. The sequence is that of Leucyl/phenylalanyl-tRNA--protein transferase from Anaeromyxobacter dehalogenans (strain 2CP-C).